Reading from the N-terminus, the 301-residue chain is Protein FdhE homolog (301 aa).

Belongs to the FdhE family.

It is found in the cytoplasm. In terms of biological role, necessary for formate dehydrogenase activity. The chain is Protein FdhE homolog from Shewanella baltica (strain OS195).